The sequence spans 463 residues: Asparagine--tRNA ligase (463 aa).

This sequence belongs to the class-II aminoacyl-tRNA synthetase family. As to quaternary structure, homodimer.

The protein localises to the cytoplasm. It carries out the reaction tRNA(Asn) + L-asparagine + ATP = L-asparaginyl-tRNA(Asn) + AMP + diphosphate + H(+). This Desulfitobacterium hafniense (strain Y51) protein is Asparagine--tRNA ligase.